A 61-amino-acid chain; its full sequence is Small ribosomal subunit protein uS14B (61 aa).

Residues C24, C27, C40, and C43 each contribute to the Zn(2+) site.

Belongs to the universal ribosomal protein uS14 family. Zinc-binding uS14 subfamily. As to quaternary structure, part of the 30S ribosomal subunit. Contacts proteins S3 and S10. The cofactor is Zn(2+).

Its function is as follows. Binds 16S rRNA, required for the assembly of 30S particles and may also be responsible for determining the conformation of the 16S rRNA at the A site. The chain is Small ribosomal subunit protein uS14B from Streptococcus pyogenes serotype M6 (strain ATCC BAA-946 / MGAS10394).